A 430-amino-acid chain; its full sequence is Histidinol dehydrogenase (430 aa).

NAD(+)-binding residues include Y129, Q190, and N213. The substrate site is built by S236, Q258, and H261. Zn(2+) is bound by residues Q258 and H261. Active-site proton acceptor residues include E326 and H327. Substrate contacts are provided by H327, D360, E414, and H419. Residue D360 coordinates Zn(2+). Residue H419 coordinates Zn(2+).

Belongs to the histidinol dehydrogenase family. Zn(2+) serves as cofactor.

It catalyses the reaction L-histidinol + 2 NAD(+) + H2O = L-histidine + 2 NADH + 3 H(+). The protein operates within amino-acid biosynthesis; L-histidine biosynthesis; L-histidine from 5-phospho-alpha-D-ribose 1-diphosphate: step 9/9. Its function is as follows. Catalyzes the sequential NAD-dependent oxidations of L-histidinol to L-histidinaldehyde and then to L-histidine. The chain is Histidinol dehydrogenase from Caldanaerobacter subterraneus subsp. tengcongensis (strain DSM 15242 / JCM 11007 / NBRC 100824 / MB4) (Thermoanaerobacter tengcongensis).